Consider the following 114-residue polypeptide: Flagellar transcriptional regulator FlhD (114 aa).

This sequence belongs to the FlhD family. As to quaternary structure, homodimer; disulfide-linked. Forms a heterohexamer composed of two FlhC and four FlhD subunits. Each FlhC binds a FlhD dimer, forming a heterotrimer, and a hexamer assembles by dimerization of two heterotrimers.

The protein localises to the cytoplasm. Its function is as follows. Functions in complex with FlhC as a master transcriptional regulator that regulates transcription of several flagellar and non-flagellar operons by binding to their promoter region. Activates expression of class 2 flagellar genes, including fliA, which is a flagellum-specific sigma factor that turns on the class 3 genes. Also regulates genes whose products function in a variety of physiological pathways. This is Flagellar transcriptional regulator FlhD from Wigglesworthia glossinidia brevipalpis.